The primary structure comprises 125 residues: PEP-dependent dihydroxyacetone kinase 2, phosphoryl donor subunit DhaM (125 aa).

The PTS EIIA type-4 domain occupies 1 to 125 (MISIVLVSHS…AILQELTNVH (125 aa)). His9 serves as the catalytic Tele-phosphohistidine intermediate.

The protein belongs to the PEP-utilizing enzyme family. In terms of assembly, homodimer. The dihydroxyacetone kinase complex is composed of a homodimer of DhaM, a homodimer of DhaK and the subunit DhaL.

The protein resides in the cytoplasm. The catalysed reaction is dihydroxyacetone + phosphoenolpyruvate = dihydroxyacetone phosphate + pyruvate. Component of the dihydroxyacetone kinase complex, which is responsible for the phosphoenolpyruvate (PEP)-dependent phosphorylation of dihydroxyacetone. DhaM serves as the phosphoryl donor. Is phosphorylated by phosphoenolpyruvate in an EI- and HPr-dependent reaction, and a phosphorelay system on histidine residues finally leads to phosphoryl transfer to DhaL and dihydroxyacetone. The chain is PEP-dependent dihydroxyacetone kinase 2, phosphoryl donor subunit DhaM from Listeria innocua serovar 6a (strain ATCC BAA-680 / CLIP 11262).